A 513-amino-acid polypeptide reads, in one-letter code: 5-aminolevulinate synthase, erythroid-specific, mitochondrial (513 aa).

The transit peptide at methionine 1–arginine 18 directs the protein to the mitochondrion. Residue arginine 98 coordinates succinyl-CoA. Cysteine 190 and phenylalanine 191 together coordinate pyridoxal 5'-phosphate. Positions 212 and 231 each coordinate succinyl-CoA. Pyridoxal 5'-phosphate is bound by residues serine 264, histidine 292, and threonine 320. Lysine 323 is an active-site residue. At lysine 323 the chain carries N6-(pyridoxal phosphate)lysine. Positions 352 and 353 each coordinate pyridoxal 5'-phosphate. Threonine 437 contributes to the succinyl-CoA binding site.

It belongs to the class-II pyridoxal-phosphate-dependent aminotransferase family. As to quaternary structure, homodimer. Pyridoxal 5'-phosphate serves as cofactor. As to expression, erythroid-specific.

Its subcellular location is the mitochondrion inner membrane. It carries out the reaction succinyl-CoA + glycine + H(+) = 5-aminolevulinate + CO2 + CoA. The protein operates within porphyrin-containing compound metabolism; protoporphyrin-IX biosynthesis; 5-aminolevulinate from glycine: step 1/1. Catalyzes the pyridoxal 5'-phosphate (PLP)-dependent condensation of succinyl-CoA and glycine to form aminolevulinic acid (ALA), with CoA and CO2 as by-products. Contributes significantly to heme formation during erythropoiesis. The chain is 5-aminolevulinate synthase, erythroid-specific, mitochondrial (ALAS2) from Gallus gallus (Chicken).